The chain runs to 198 residues: Putative glutathione S-transferase alpha-2 (198 aa).

Ser2 carries the N-acetylserine modification. The GST N-terminal domain occupies Ser5–Gly81. Glutathione-binding positions include Tyr11, Arg45, Gln52–Leu53, and Gln65–Ser66. The region spanning Asn83 to Phe198 is the GST C-terminal domain.

It belongs to the GST superfamily. Alpha family.

The enzyme catalyses RX + glutathione = an S-substituted glutathione + a halide anion + H(+). Conjugation of reduced glutathione to a wide number of exogenous and endogenous hydrophobic electrophiles. In Dictyostelium discoideum (Social amoeba), this protein is Putative glutathione S-transferase alpha-2 (gsta2-1).